Consider the following 1100-residue polypeptide: DNA-directed RNA polymerase subunit beta (1100 aa).

The interval 1064–1100 is disordered; the sequence is YEEDKEVDLMADVNQRRTPSRPTYESMSVGDIDDDDD. A compositionally biased stretch (polar residues) spans 1079–1089; it reads RRTPSRPTYES.

This sequence belongs to the RNA polymerase beta chain family. In cyanobacteria the RNAP catalytic core is composed of 2 alpha, 1 beta, 1 beta', 1 gamma and 1 omega subunit. When a sigma factor is associated with the core the holoenzyme is formed, which can initiate transcription.

It catalyses the reaction RNA(n) + a ribonucleoside 5'-triphosphate = RNA(n+1) + diphosphate. In terms of biological role, DNA-dependent RNA polymerase catalyzes the transcription of DNA into RNA using the four ribonucleoside triphosphates as substrates. This is DNA-directed RNA polymerase subunit beta from Synechococcus elongatus (strain ATCC 33912 / PCC 7942 / FACHB-805) (Anacystis nidulans R2).